The primary structure comprises 417 residues: Serine hydroxymethyltransferase (417 aa).

(6S)-5,6,7,8-tetrahydrofolate-binding positions include leucine 121 and 125–127 (GHL). N6-(pyridoxal phosphate)lysine is present on lysine 229. A (6S)-5,6,7,8-tetrahydrofolate-binding site is contributed by 355–357 (SPF).

Belongs to the SHMT family. As to quaternary structure, homodimer. It depends on pyridoxal 5'-phosphate as a cofactor.

The protein localises to the cytoplasm. It catalyses the reaction (6R)-5,10-methylene-5,6,7,8-tetrahydrofolate + glycine + H2O = (6S)-5,6,7,8-tetrahydrofolate + L-serine. The protein operates within one-carbon metabolism; tetrahydrofolate interconversion. Its pathway is amino-acid biosynthesis; glycine biosynthesis; glycine from L-serine: step 1/1. Catalyzes the reversible interconversion of serine and glycine with tetrahydrofolate (THF) serving as the one-carbon carrier. This reaction serves as the major source of one-carbon groups required for the biosynthesis of purines, thymidylate, methionine, and other important biomolecules. Also exhibits THF-independent aldolase activity toward beta-hydroxyamino acids, producing glycine and aldehydes, via a retro-aldol mechanism. The sequence is that of Serine hydroxymethyltransferase from Xanthomonas euvesicatoria pv. vesicatoria (strain 85-10) (Xanthomonas campestris pv. vesicatoria).